The following is a 187-amino-acid chain: Lysozyme C-like protein DDB_G0288143 (187 aa).

The signal sequence occupies residues 1 to 23 (MKVSNLISTITIASALCLSLTNA). Disulfide bonds link Cys-50–Cys-125, Cys-74–Cys-82, and Cys-78–Cys-97. The active site involves Glu-55. Residues 133–187 (QHGSHSSTSRDSSSSSSRDSTGTGYSSSGSGTSGSGSNSGQTGHFIPGQSGHGLN) form a disordered region. Residues 136 to 175 (SHSSTSRDSSSSSSRDSTGTGYSSSGSGTSGSGSNSGQTG) show a composition bias toward low complexity.

The protein belongs to the glycosyl hydrolase 22 family.

The protein is Lysozyme C-like protein DDB_G0288143 of Dictyostelium discoideum (Social amoeba).